Consider the following 48-residue polypeptide: DNA-directed RNA polymerase subunit Rpo12 (48 aa).

3 residues coordinate Zn(2+): C9, C26, and C29.

This sequence belongs to the archaeal Rpo12/eukaryotic RPC10 RNA polymerase subunit family. Part of the RNA polymerase complex. It depends on Zn(2+) as a cofactor.

The protein localises to the cytoplasm. It carries out the reaction RNA(n) + a ribonucleoside 5'-triphosphate = RNA(n+1) + diphosphate. In terms of biological role, DNA-dependent RNA polymerase (RNAP) catalyzes the transcription of DNA into RNA using the four ribonucleoside triphosphates as substrates. The sequence is that of DNA-directed RNA polymerase subunit Rpo12 from Sulfurisphaera tokodaii (strain DSM 16993 / JCM 10545 / NBRC 100140 / 7) (Sulfolobus tokodaii).